The primary structure comprises 237 residues: Concanavalin-Br (237 aa).

Glu8 and Asp10 together coordinate Mn(2+). Ca(2+) contacts are provided by Asp10, Tyr12, Asn14, and Asp19. Tyr12 provides a ligand contact to a carbohydrate. Mn(2+)-binding residues include Asp19, His24, and Ser34. 99 to 100 is an a carbohydrate binding site; sequence LY. Position 208 (Asp208) interacts with Ca(2+). A carbohydrate is bound at residue Arg228.

The protein belongs to the leguminous lectin family. In terms of assembly, homotetramer.

Its function is as follows. Glucose/D-mannose specific lectin. Has anti-inflammatory activity in rats. Induces histamine release in mast cells from hamster and rat. Induces lymphocyte proliferation and IFNG production. Shows toxicity against the aquatic snail B.glabrata at concentrations higher than 20 ug/ml. The polypeptide is Concanavalin-Br (Canavalia brasiliensis (Brazilian jack bean)).